The sequence spans 169 residues: MPLLDSFTVDHTRMIAPAVRVAKRMKTPCGDDITVFDLRFCKPNEERMPSKGIHTLEHLFAGFMREHLNSKKVEIIDISPMGCRTGFYMSLLGTPKPKRVAKAWAASMKDVLNVKSQKDIPELNVYQCGSYKMHSLKEAKEIAQNVLDRGIGIMNNKKLKLSKKLLKGL.

Histidine 54, histidine 58, and cysteine 128 together coordinate Fe cation.

Belongs to the LuxS family. In terms of assembly, homodimer. Requires Fe cation as cofactor.

It catalyses the reaction S-(5-deoxy-D-ribos-5-yl)-L-homocysteine = (S)-4,5-dihydroxypentane-2,3-dione + L-homocysteine. Its function is as follows. Involved in the synthesis of autoinducer 2 (AI-2) which is secreted by bacteria and is used to communicate both the cell density and the metabolic potential of the environment. The regulation of gene expression in response to changes in cell density is called quorum sensing. Catalyzes the transformation of S-ribosylhomocysteine (RHC) to homocysteine (HC) and 4,5-dihydroxy-2,3-pentadione (DPD). This Sulfurovum sp. (strain NBC37-1) protein is S-ribosylhomocysteine lyase.